Reading from the N-terminus, the 169-residue chain is N-alpha-acetyltransferase 50 (169 aa).

Positions 6-155 (IELGDVTPHN…DAHVLQKNLK (150 aa)) constitute an N-acetyltransferase domain. A Phosphothreonine modification is found at Thr-12. Tyr-31 contacts substrate. N6-acetyllysine is present on residues Lys-34 and Lys-37. Tyr-73 is an active-site residue. Residue Met-75 participates in substrate binding. Residue 77–90 (LGCLAPYRRLGIGT) coordinates acetyl-CoA. At Tyr-110 the chain carries Phosphotyrosine. His-112 is a catalytic residue. 117-126 (NESAIDFYRK) contacts CoA. The segment at 138–141 (YYKR) is substrate. Residue Lys-140 is modified to N6-acetyllysine.

Belongs to the acetyltransferase family. GNAT subfamily. As to quaternary structure, component of the N-terminal acetyltransferase E (NatE) complex at least composed of NAA10, NAA15 and NAA50. Interacts with NAA10. Interacts with NAA15. Predominantly interacts with NAA15 in the N-terminal acetyltransferase A complex (NatA complex); the interactions reduce the acetylation activity of the NatA complex. Component of the N-terminal acetyltransferase E (NatE)/HYPK complex at least composed of NAA10, NAA15, NAA50 and HYPK. Within the complex interacts with NAA15. Its capacity to interact with the NatA complex is reduced by HYPK. Interacts with NAA35.

Its subcellular location is the cytoplasm. It is found in the nucleus. The enzyme catalyses N-terminal L-methionyl-L-alanyl-[protein] + acetyl-CoA = N-terminal N(alpha)-acetyl-L-methionyl-L-alanyl-[protein] + CoA + H(+). It catalyses the reaction N-terminal L-methionyl-L-seryl-[protein] + acetyl-CoA = N-terminal N(alpha)-acetyl-L-methionyl-L-seryl-[protein] + CoA + H(+). The catalysed reaction is N-terminal L-methionyl-L-valyl-[protein] + acetyl-CoA = N-terminal N(alpha)-acetyl-L-methionyl-L-valyl-[protein] + CoA + H(+). It carries out the reaction N-terminal L-methionyl-L-threonyl-[protein] + acetyl-CoA = N-terminal N(alpha)-acetyl-L-methionyl-L-threonyl-[protein] + CoA + H(+). The enzyme catalyses N-terminal L-methionyl-L-lysyl-[protein] + acetyl-CoA = N-terminal N(alpha)-acetyl-L-methionyl-L-lysyl-[protein] + CoA + H(+). It catalyses the reaction N-terminal L-methionyl-L-leucyl-[protein] + acetyl-CoA = N-terminal N(alpha)-acetyl-L-methionyl-L-leucyl-[protein] + CoA + H(+). The catalysed reaction is N-terminal L-methionyl-L-phenylalanyl-[protein] + acetyl-CoA = N-terminal N(alpha)-acetyl-L-methionyl-L-phenylalanyl-[protein] + CoA + H(+). It carries out the reaction N-terminal L-methionyl-L-tyrosyl-[protein] + acetyl-CoA = N-terminal N(alpha)-acetyl-L-methionyl-L-tyrosyl-[protein] + CoA + H(+). Functionally, N-alpha-acetyltransferase that acetylates the N-terminus of proteins that retain their initiating methionine. Has a broad substrate specificity: able to acetylate the initiator methionine of most peptides, except for those with a proline in second position. Also displays N-epsilon-acetyltransferase activity by mediating acetylation of the side chain of specific lysines on proteins. Autoacetylates in vivo. The relevance of N-epsilon-acetyltransferase activity is however unclear: able to acetylate H4 in vitro, but this result has not been confirmed in vivo. Component of N-alpha-acetyltransferase complexes containing NAA10 and NAA15, which has N-alpha-acetyltransferase activity. Does not influence the acetyltransferase activity of NAA10. However, it negatively regulates the N-alpha-acetyltransferase activity of the N-terminal acetyltransferase A complex (also called the NatA complex). The multiprotein complexes probably constitute the major contributor for N-terminal acetylation at the ribosome exit tunnel, with NAA10 acetylating all amino termini that are devoid of methionine and NAA50 acetylating other peptides. Required for sister chromatid cohesion during mitosis by promoting binding of CDCA5/sororin to cohesin: may act by counteracting the function of NAA10. The protein is N-alpha-acetyltransferase 50 of Mus musculus (Mouse).